The following is a 103-amino-acid chain: uncharacterized protein (103 aa).

This is an uncharacterized protein from Sulfolobus islandicus filamentous virus (isolate Iceland/Hveragerdi) (SIFV).